The following is a 180-amino-acid chain: Der GTPase-activating protein YihI (180 aa).

2 disordered regions span residues Met1–Arg90 and Glu145–Gly180. Over residues Asn23–Arg32 the composition is skewed to basic and acidic residues. Over residues Leu33–Leu43 the composition is skewed to basic residues. Composition is skewed to basic and acidic residues over residues Ser50–Leu68 and Pro80–Arg90. Positions Asp165 to Gly180 are enriched in acidic residues.

It belongs to the YihI family. As to quaternary structure, interacts with Der.

Functionally, a GTPase-activating protein (GAP) that modifies Der/EngA GTPase function. May play a role in ribosome biogenesis. In Vibrio campbellii (strain ATCC BAA-1116), this protein is Der GTPase-activating protein YihI.